A 374-amino-acid chain; its full sequence is Aminomethyltransferase (374 aa).

This sequence belongs to the GcvT family. As to quaternary structure, the glycine cleavage system is composed of four proteins: P, T, L and H.

It catalyses the reaction N(6)-[(R)-S(8)-aminomethyldihydrolipoyl]-L-lysyl-[protein] + (6S)-5,6,7,8-tetrahydrofolate = N(6)-[(R)-dihydrolipoyl]-L-lysyl-[protein] + (6R)-5,10-methylene-5,6,7,8-tetrahydrofolate + NH4(+). In terms of biological role, the glycine cleavage system catalyzes the degradation of glycine. The polypeptide is Aminomethyltransferase (Caldanaerobacter subterraneus subsp. tengcongensis (strain DSM 15242 / JCM 11007 / NBRC 100824 / MB4) (Thermoanaerobacter tengcongensis)).